Reading from the N-terminus, the 135-residue chain is U-myrmeciitoxin(01)-Mg7a (135 aa).

The first 21 residues, 1-21, serve as a signal peptide directing secretion; that stretch reads MKLSCLSLALAIILLLAIVHS. The propeptide occupies 22 to 72; the sequence is PNMEVKALAGPEADAIGFADAFGEADAFGEADAFGEADAFGEADAFGEADA. The interval 69–95 is disordered; that stretch reads EADAKRSKSSSKTKPKKPKKPKKKIKI. Basic residues predominate over residues 75 to 93; sequence SKSSSKTKPKKPKKPKKKI. The O-linked (GalNAc...) serine glycan is linked to serine 120. O-linked (GalNAc...) threonine glycans are attached at residues threonine 129 and threonine 130.

It belongs to the formicidae venom precursor-01 superfamily. In terms of processing, glycosylation is critical to maintaining the aqueous solubility of this protein, but does not directly contribute to its activity. In terms of tissue distribution, expressed by the venom gland.

The protein resides in the secreted. It localises to the target cell membrane. Neurotoxin that triggers pain behavior and inflammation in mammals, and is paralytic and lethal to insects. Causes a time-dependent increase in cell leak current. May act by targeting membranes. In Myrmecia gulosa (Red bulldog ant), this protein is U-myrmeciitoxin(01)-Mg7a.